Reading from the N-terminus, the 274-residue chain is Formamidopyrimidine-DNA glycosylase (274 aa).

Pro2 serves as the catalytic Schiff-base intermediate with DNA. The active-site Proton donor is Glu3. Catalysis depends on Lys60, which acts as the Proton donor; for beta-elimination activity. Residues His93 and Arg112 each contribute to the DNA site. The FPG-type zinc-finger motif lies at 240–274; sequence FVYGRKGEPCKRCGTPIEKTVVAGRGTHYCPRCQR. Catalysis depends on Arg264, which acts as the Proton donor; for delta-elimination activity.

It belongs to the FPG family. In terms of assembly, monomer. The cofactor is Zn(2+).

The catalysed reaction is Hydrolysis of DNA containing ring-opened 7-methylguanine residues, releasing 2,6-diamino-4-hydroxy-5-(N-methyl)formamidopyrimidine.. It catalyses the reaction 2'-deoxyribonucleotide-(2'-deoxyribose 5'-phosphate)-2'-deoxyribonucleotide-DNA = a 3'-end 2'-deoxyribonucleotide-(2,3-dehydro-2,3-deoxyribose 5'-phosphate)-DNA + a 5'-end 5'-phospho-2'-deoxyribonucleoside-DNA + H(+). Involved in base excision repair of DNA damaged by oxidation or by mutagenic agents. Acts as a DNA glycosylase that recognizes and removes damaged bases. Has a preference for oxidized purines, such as 7,8-dihydro-8-oxoguanine (8-oxoG). Has AP (apurinic/apyrimidinic) lyase activity and introduces nicks in the DNA strand. Cleaves the DNA backbone by beta-delta elimination to generate a single-strand break at the site of the removed base with both 3'- and 5'-phosphates. This Geobacillus kaustophilus (strain HTA426) protein is Formamidopyrimidine-DNA glycosylase.